We begin with the raw amino-acid sequence, 90 residues long: DNA-directed RNA polymerase subunit omega (90 aa).

A disordered region spans residues 70-90 (QEQQEQEAAELAAVSSIMHNR).

The protein belongs to the RNA polymerase subunit omega family. In terms of assembly, the RNAP catalytic core consists of 2 alpha, 1 beta, 1 beta' and 1 omega subunit. When a sigma factor is associated with the core the holoenzyme is formed, which can initiate transcription.

It carries out the reaction RNA(n) + a ribonucleoside 5'-triphosphate = RNA(n+1) + diphosphate. Promotes RNA polymerase assembly. Latches the N- and C-terminal regions of the beta' subunit thereby facilitating its interaction with the beta and alpha subunits. The chain is DNA-directed RNA polymerase subunit omega from Vibrio cholerae serotype O1 (strain ATCC 39541 / Classical Ogawa 395 / O395).